The primary structure comprises 297 residues: Succinate dehydrogenase [ubiquinone] iron-sulfur subunit, mitochondrial (297 aa).

The tract at residues 33–55 (TAEALSASRPPIKETKTSTVKEP) is disordered. The 80-residue stretch at 78-157 (DKPRMQSYTL…ETRIYPLPHT (80 aa)) folds into the 2Fe-2S ferredoxin-type domain. [2Fe-2S] cluster is bound by residues Cys117, Cys122, Cys125, and Cys137. In terms of domain architecture, 4Fe-4S ferredoxin-type spans 199-229 (DRKKLDGLYECILCACCSTSCPSYWWNSEEY). The [4Fe-4S] cluster site is built by Cys209, Cys212, and Cys215. Cys219 serves as a coordination point for [3Fe-4S] cluster. Trp224 contributes to the a ubiquinone binding site. 2 residues coordinate [3Fe-4S] cluster: Cys266 and Cys272. A [4Fe-4S] cluster-binding site is contributed by Cys276.

This sequence belongs to the succinate dehydrogenase/fumarate reductase iron-sulfur protein family. In terms of assembly, component of complex II composed of four subunits: a flavoprotein (FP), an iron-sulfur protein (IP), and a cytochrome b composed of a large and a small subunit. Requires [2Fe-2S] cluster as cofactor. The cofactor is [3Fe-4S] cluster. [4Fe-4S] cluster serves as cofactor.

It localises to the mitochondrion inner membrane. It catalyses the reaction a quinone + succinate = fumarate + a quinol. The protein operates within carbohydrate metabolism; tricarboxylic acid cycle; fumarate from succinate (eukaryal route): step 1/1. Its function is as follows. Iron-sulfur protein (IP) subunit of succinate dehydrogenase (SDH) that is involved in complex II of the mitochondrial electron transport chain and is responsible for transferring electrons from succinate to ubiquinone (coenzyme Q). The polypeptide is Succinate dehydrogenase [ubiquinone] iron-sulfur subunit, mitochondrial (SDH2) (Zymoseptoria tritici (Speckled leaf blotch fungus)).